The following is a 654-amino-acid chain: Collagen alpha-1(XXV) chain (654 aa).

The interval 1–26 (MLLKKHAGKGGGREPRSEDPTPAEQH) is disordered. Over 1–33 (MLLKKHAGKGGGREPRSEDPTPAEQHCARTMPP) the chain is Cytoplasmic. The helical; Signal-anchor for type II membrane protein transmembrane segment at 34-54 (CAVLAALLSVVAVVSCLYLGV) threads the bilayer. The Extracellular portion of the chain corresponds to 55 to 654 (KTNDLQARIA…GLPMPGCWQK (600 aa)). Position 113 is a pyrrolidone carboxylic acid (Glu) (E113). Residues 116–168 (SECNCPAGPPGKRGKRGRRGESGPPGQPGPQGPPGPKGDKGEQGDQGPRMVFP) form a disordered region. In terms of domain architecture, Collagen-like 1 spans 121-164 (PAGPPGKRGKRGRRGESGPPGQPGPQGPPGPKGDKGEQGDQGPR). Positions 140 to 151 (PGQPGPQGPPGP) are enriched in pro residues. Residues 181-188 (LIKRRLIK) are interaction with amyloid-beta peptide. 2 disordered regions span residues 189 to 426 (GDQG…QGAT) and 445 to 654 (LTVT…CWQK). Collagen-like domains lie at 192–247 (GQAG…QKGS), 249–308 (GAPG…PGSS), 311–370 (GIKG…AGPP), 372–425 (RGER…DQGA), and 447–505 (VTGP…PGLP). The segment covering 196–208 (PPGPPGPPGPRGP) has biased composition (pro residues). Positions 230 to 245 (PGEQGLMGPLGPPGQK) are enriched in low complexity. Positions 280 to 290 (EPGEQGEKGDA) are enriched in basic and acidic residues. The segment covering 336–358 (LPGIKGEPGFIGPQGEPGLPGLP) has biased composition (low complexity). Basic and acidic residues-rich tracts occupy residues 361 to 377 (KGERGEAGPPGRGERGE) and 398 to 407 (SKGDRGEKGD). Residues 457–466 (QGLQGPKGEQ) are compositionally biased toward low complexity. Residues 494 to 503 (GEKGGIGLPG) are compositionally biased toward gly residues. The segment covering 517–527 (SGMPGPQGPSI) has biased composition (low complexity). Positions 528-543 (IGPPGPPGPHGPPGPM) are enriched in pro residues. The region spanning 571–630 (GEKGAMGEPGPRGPYGLPGKDGEPGLDGFPGPRGEKGDLGEKGEKGFRGVKGEKGEPGQP) is the Collagen-like 7 domain. Residues 603–626 (RGEKGDLGEKGEKGFRGVKGEKGE) are compositionally biased toward basic and acidic residues.

Forms homodimers and homotrimers. Binds to the fibrillized forms of amyloid-beta protein 40 (beta-APP40) and amyloid-beta protein 42 (beta-APP42). Found associated with beta-APP42 more frequently than with beta-APP40. Post-translationally, undergoes proteolytic cleavage by furin protease to yield the soluble collagen-like Alzheimer amyloid plaque component. In terms of processing, glycosylated. Hydroxylated on 11% of proline residues and 49% of lysine residues. In terms of tissue distribution, expressed predominantly in brain. Deposited preferentially in primitive or neuritic amyloid plaques which are typical of Alzheimer disease.

It is found in the membrane. In terms of biological role, inhibits fibrillization of amyloid-beta peptide during the elongation phase. Has also been shown to assemble amyloid fibrils into protease-resistant aggregates. Binds heparin. The chain is Collagen alpha-1(XXV) chain from Homo sapiens (Human).